The chain runs to 320 residues: Carbonic anhydrase 6 (320 aa).

An N-terminal signal peptide occupies residues 1–17 (MRALALLLALPLLGARA). Positions 21–278 (SLWTYSEGAL…LNGRVVESNF (258 aa)) constitute an Alpha-carbonic anhydrase domain. The cysteines at positions 42 and 224 are disulfide-linked. The Proton donor/acceptor role is filled by H85. Zn(2+) is bound by residues H111, H113, and H138. Position 220 to 221 (220 to 221 (TT)) interacts with substrate. N-linked (GlcNAc...) asparagine glycosylation occurs at N256.

It belongs to the alpha-carbonic anhydrase family. Zn(2+) is required as a cofactor.

The protein resides in the secreted. The enzyme catalyses hydrogencarbonate + H(+) = CO2 + H2O. Functionally, reversible hydration of carbon dioxide. Its role in saliva is unknown. This Canis lupus familiaris (Dog) protein is Carbonic anhydrase 6 (CA6).